A 361-amino-acid polypeptide reads, in one-letter code: GDSL esterase/lipase At4g18970 (361 aa).

An N-terminal signal peptide occupies residues 1-22 (MARVCVMMMAMAIAMAMNIAMG). Catalysis depends on Ser-35, which acts as the Nucleophile. Active-site residues include Asp-325 and His-328.

It belongs to the 'GDSL' lipolytic enzyme family.

The protein localises to the secreted. In Arabidopsis thaliana (Mouse-ear cress), this protein is GDSL esterase/lipase At4g18970.